The primary structure comprises 169 residues: Cell division inhibitor SulA (169 aa).

The segment at 106–112 is ftsZ binding; that stretch reads ALRTGNY. A lon protease binding region spans residues 162 to 169; that stretch reads KIHSNLYH.

The protein belongs to the SulA family. As to quaternary structure, interacts with FtsZ. Post-translationally, is rapidly cleaved and degraded by the Lon protease once DNA damage is repaired.

Component of the SOS system and an inhibitor of cell division. Accumulation of SulA causes rapid cessation of cell division and the appearance of long, non-septate filaments. In the presence of GTP, binds a polymerization-competent form of FtsZ in a 1:1 ratio, thus inhibiting FtsZ polymerization and therefore preventing it from participating in the assembly of the Z ring. This mechanism prevents the premature segregation of damaged DNA to daughter cells during cell division. This Escherichia coli O81 (strain ED1a) protein is Cell division inhibitor SulA.